The primary structure comprises 156 residues: Small ribosomal subunit protein uS7 (156 aa).

It belongs to the universal ribosomal protein uS7 family. As to quaternary structure, part of the 30S ribosomal subunit. Contacts proteins S9 and S11.

In terms of biological role, one of the primary rRNA binding proteins, it binds directly to 16S rRNA where it nucleates assembly of the head domain of the 30S subunit. Is located at the subunit interface close to the decoding center, probably blocks exit of the E-site tRNA. In Prochlorococcus marinus subsp. pastoris (strain CCMP1986 / NIES-2087 / MED4), this protein is Small ribosomal subunit protein uS7.